The chain runs to 1058 residues: Carbamoyl phosphate synthase large chain (1058 aa).

The interval 1–401 is carboxyphosphate synthetic domain; that stretch reads MPKRKDIQKI…SLLKACRSLE (401 aa). ATP contacts are provided by R129, R169, G175, G176, R208, I210, E215, G241, I242, H243, Q284, and E298. In terms of domain architecture, ATP-grasp 1 spans 133-327; it reads KQLMQELDQP…IAKLAAKIAV (195 aa). The Mg(2+) site is built by Q284, E298, and N300. Mn(2+) contacts are provided by Q284, E298, and N300. The interval 402–546 is oligomerization domain; that stretch reads IGVCHNEMTS…YSTYELENES (145 aa). The carbamoyl phosphate synthetic domain stretch occupies residues 547–929; the sequence is VQSNKESILV…ALYKAFEANN (383 aa). In terms of domain architecture, ATP-grasp 2 spans 671–861; that stretch reads EKALKELGIP…MAQIATKLIL (191 aa). ATP is bound by residues R707, S746, I748, E752, G777, V778, H779, S780, Q820, and E832. 3 residues coordinate Mg(2+): Q820, E832, and N834. Residues Q820, E832, and N834 each coordinate Mn(2+). One can recognise an MGS-like domain in the interval 930–1058; that stretch reads SHLSEFGQIV…ESRCFNIEAI (129 aa). An allosteric domain region spans residues 930 to 1058; sequence SHLSEFGQIV…ESRCFNIEAI (129 aa).

It belongs to the CarB family. In terms of assembly, composed of two chains; the small (or glutamine) chain promotes the hydrolysis of glutamine to ammonia, which is used by the large (or ammonia) chain to synthesize carbamoyl phosphate. Tetramer of heterodimers (alpha,beta)4. It depends on Mg(2+) as a cofactor. Requires Mn(2+) as cofactor.

It carries out the reaction hydrogencarbonate + L-glutamine + 2 ATP + H2O = carbamoyl phosphate + L-glutamate + 2 ADP + phosphate + 2 H(+). The enzyme catalyses hydrogencarbonate + NH4(+) + 2 ATP = carbamoyl phosphate + 2 ADP + phosphate + 2 H(+). It functions in the pathway amino-acid biosynthesis; L-arginine biosynthesis; carbamoyl phosphate from bicarbonate: step 1/1. The protein operates within pyrimidine metabolism; UMP biosynthesis via de novo pathway; (S)-dihydroorotate from bicarbonate: step 1/3. Its function is as follows. Large subunit of the glutamine-dependent carbamoyl phosphate synthetase (CPSase). CPSase catalyzes the formation of carbamoyl phosphate from the ammonia moiety of glutamine, carbonate, and phosphate donated by ATP, constituting the first step of 2 biosynthetic pathways, one leading to arginine and/or urea and the other to pyrimidine nucleotides. The large subunit (synthetase) binds the substrates ammonia (free or transferred from glutamine from the small subunit), hydrogencarbonate and ATP and carries out an ATP-coupled ligase reaction, activating hydrogencarbonate by forming carboxy phosphate which reacts with ammonia to form carbamoyl phosphate. This Streptococcus pyogenes serotype M3 (strain ATCC BAA-595 / MGAS315) protein is Carbamoyl phosphate synthase large chain.